The chain runs to 276 residues: Small ribosomal subunit protein uS2 (276 aa).

The interval 226–276 (KKAREERQLAAAREAAGEPKSEDAPAEAAATEEAPATEAPAAEAQQENAAE) is disordered. The span at 251-276 (AEAAATEEAPATEAPAAEAQQENAAE) shows a compositional bias: low complexity.

Belongs to the universal ribosomal protein uS2 family.

This is Small ribosomal subunit protein uS2 from Corynebacterium efficiens (strain DSM 44549 / YS-314 / AJ 12310 / JCM 11189 / NBRC 100395).